The primary structure comprises 336 residues: Atypical chemokine receptor 1 (336 aa).

The interval 1–30 (MGNCLHRAELSPSTENSSQLDFEDVWNSSY) is mediates Plasmodium vivax Duffy receptor (PVDR) binding. Residues 1–63 (MGNCLHRAEL…CNLLDDSALP (63 aa)) are Extracellular-facing. A glycan (N-linked (GlcNAc...) asparagine) is linked at Asn16. Tyr30 carries the post-translational modification Sulfotyrosine. A glycan (N-linked (GlcNAc...) asparagine) is linked at Asn33. Tyr41 is subject to Sulfotyrosine. 2 disulfide bridges follow: Cys51–Cys276 and Cys129–Cys195. Residues 64 to 84 (FFILTSVLGILASSTVLFMLF) form a helical membrane-spanning segment. The Cytoplasmic portion of the chain corresponds to 85 to 95 (RPLFRWQLCPG). A helical membrane pass occupies residues 96–116 (WPVLAQLAVGSALFSIVVPVL). Topologically, residues 117-129 (APGLGSTRSSALC) are extracellular. The chain crosses the membrane as a helical span at residues 130 to 153 (SLGYCVWYGSAFAQALLLGCHASL). The Cytoplasmic segment spans residues 154–166 (GHRLGAGQVPGLT). The chain crosses the membrane as a helical span at residues 167–187 (LGLTVGIWGVAALLTLPVTLA). Residues 188 to 207 (SGASGGLCTLIYSTELKALQ) lie on the Extracellular side of the membrane. Residues 208-228 (ATHTVACLAIFVLLPLGLFGA) form a helical membrane-spanning segment. Residues 229–244 (KGLKKALGMGPGPWMN) lie on the Cytoplasmic side of the membrane. Residues 245-265 (ILWAWFIFWWPHGVVLGLDFL) form a helical membrane-spanning segment. The Extracellular portion of the chain corresponds to 266–287 (VRSKLLLLSTCLAQQALDLLLN). The helical transmembrane segment at 288-308 (LAEALAILHCVATPLLLALFC) threads the bilayer. Topologically, residues 309-336 (HQATRTLLPSLPLPEGWSSHLDTLGSKS) are cytoplasmic.

The protein belongs to the G-protein coupled receptor 1 family. Atypical chemokine receptor subfamily. As to quaternary structure, (Microbial infection) Interacts (via N-terminal extracellular domain) with Plasmodium vivax Duffy receptor (PVDR) (via PvRII region). In terms of assembly, (Microbial infection) Interacts (via N-terminal extracellular domain) with Plasmodium knowlesi Duffy receptor alpha form (DBPalpha) (via region II). Sulfation at Tyr-41 facilitates interaction with MGSA/CXCL1, RANTES/CCL5 and MCP-1/CCL2 but not IL8/CXCL8. Sulfation at Tyr-30 facilitates interaction with IL8/CXCL8. In terms of processing, (Microbial infection) Sulfation at Tyr-41 facilitates interaction with Plasmodium vivax Duffy receptor (PVDR). Sulfation at Tyr-30/Tyr-41 and Tyr-41 alone increases binding affinity of Plasmodium vivax parasites and likely promotes invasion of red blood cells. Post-translationally, (Microbial infection) Sulfation at Tyr-41 facilitates interaction with Plasmodium knowlesi Duffy receptor alpha form (DBPalpha). Sulfation at Tyr-30/Tyr-41 and Tyr-41 alone increases binding affinity of Plasmodium knowlesi parasites and likely promotes invasion of red blood cells. As to expression, found in adult kidney, adult spleen, bone marrow and fetal liver. In particular, it is expressed along postcapillary venules throughout the body, except in the adult liver. Erythroid cells and postcapillary venule endothelium are the principle tissues expressing duffy. Fy(-A-B) individuals do not express duffy in the bone marrow, however they do, in postcapillary venule endothelium.

It localises to the early endosome. The protein resides in the recycling endosome. It is found in the membrane. Its function is as follows. Atypical chemokine receptor that controls chemokine levels and localization via high-affinity chemokine binding that is uncoupled from classic ligand-driven signal transduction cascades, resulting instead in chemokine sequestration, degradation, or transcytosis. Also known as interceptor (internalizing receptor) or chemokine-scavenging receptor or chemokine decoy receptor. Has a promiscuous chemokine-binding profile, interacting with inflammatory chemokines of both the CXC and the CC subfamilies but not with homeostatic chemokines. Acts as a receptor for chemokines including CCL2, CCL5, CCL7, CCL11, CCL13, CCL14, CCL17, CXCL5, CXCL6, IL8/CXCL8, CXCL11, GRO, RANTES, MCP-1 and TARC. May regulate chemokine bioavailability and, consequently, leukocyte recruitment through two distinct mechanisms: when expressed in endothelial cells, it sustains the abluminal to luminal transcytosis of tissue-derived chemokines and their subsequent presentation to circulating leukocytes; when expressed in erythrocytes, serves as blood reservoir of cognate chemokines but also as a chemokine sink, buffering potential surges in plasma chemokine levels. (Microbial infection) Acts as a receptor for the malaria parasite Plasmodium vivax. Functionally, (Microbial infection) Acts as a receptor for the malaria parasite Plasmodium knowlesi. The sequence is that of Atypical chemokine receptor 1 (ACKR1) from Homo sapiens (Human).